A 95-amino-acid chain; its full sequence is MKNYVFALLVVTAVAIALPNEDKNAPMRVHLLPQKEDESLKLEVTPVKEHHRTRRFTCDLLSGAGVDHSACAAHCILRGKTGGRCNSDRVCVCRA.

The N-terminal stretch at 1–17 (MKNYVFALLVVTAVAIA) is a signal peptide. Positions 18 to 55 (LPNEDKNAPMRVHLLPQKEDESLKLEVTPVKEHHRTRR) are excised as a propeptide. 3 disulfide bridges follow: C58/C85, C71/C91, and C75/C93.

It belongs to the invertebrate defensin family. Type 1 subfamily.

Its subcellular location is the secreted. Antibacterial peptide mostly active against Gram-positive bacteria. This chain is Defensin, found in Formica aquilonia (Red wood ant).